The chain runs to 434 residues: F-box/kelch-repeat protein At1g55270 (434 aa).

An F-box domain is found at 76–122; sequence PPLLPGLPDDLAVACLIRVPRAEHRKLRLVCKRWYRLASGNFFYSQR. 5 Kelch repeats span residues 129–178, 180–227, 229–276, 278–321, and 325–371; these read EEWV…VLSG, HLYL…VINN, LYVA…VYDK, WFLK…SLNG, and GLDC…LHNK.

The sequence is that of F-box/kelch-repeat protein At1g55270 from Arabidopsis thaliana (Mouse-ear cress).